A 1478-amino-acid chain; its full sequence is FYVE and coiled-coil domain-containing protein 1 (1478 aa).

Position 2 is an N-acetylalanine (Ala2). Positions Thr4 to Glu33 form a coiled coil. One can recognise an RUN domain in the interval Thr36–Phe169. Phosphoserine is present on Ser196. The stretch at Asn225–Arg280 forms a coiled coil. Ser342 is modified (phosphoserine). Phosphothreonine is present on Thr381. Coiled-coil stretches lie at residues Ser394–Arg555 and Gln596–Leu1151. Residues Gly586 to Glu613 form a disordered region. Ser878 carries the post-translational modification Phosphoserine. Residues Asp1173–Ser1231 form an FYVE-type zinc finger. Residues Cys1179, Cys1182, Cys1195, Cys1198, Cys1203, Cys1206, Cys1223, and Cys1226 each contribute to the Zn(2+) site. The segment covering Ser1231–Gln1261 has biased composition (low complexity). Disordered regions lie at residues Ser1231 to Asp1277 and Ser1294 to Val1332. Polar residues-rich tracts occupy residues Ser1294 to Thr1305 and Glu1314 to Pro1324. In terms of domain architecture, GOLD spans Glu1337–Val1466.

Can form homodimers. Interacts (via C-terminus) with MAP1LC3B. Interacts with RAB7A; the interaction with RAB7A induces FYCO1 recruitment to late endosomal/lysosomal compartments. Interacts with MAP1LC3B. Expressed in heart and skeletal muscle.

The protein localises to the cytoplasmic vesicle. The protein resides in the autophagosome. It is found in the endosome. Its subcellular location is the lysosome. Functionally, may mediate microtubule plus end-directed vesicle transport. This is FYVE and coiled-coil domain-containing protein 1 (FYCO1) from Homo sapiens (Human).